The primary structure comprises 299 residues: Acetylglutamate kinase (299 aa).

Residues Gly70–Gly71, Arg92, and Asn197 contribute to the substrate site.

The protein belongs to the acetylglutamate kinase family. ArgB subfamily.

It localises to the cytoplasm. The catalysed reaction is N-acetyl-L-glutamate + ATP = N-acetyl-L-glutamyl 5-phosphate + ADP. The protein operates within amino-acid biosynthesis; L-arginine biosynthesis; N(2)-acetyl-L-ornithine from L-glutamate: step 2/4. In terms of biological role, catalyzes the ATP-dependent phosphorylation of N-acetyl-L-glutamate. The polypeptide is Acetylglutamate kinase (Acidiphilium cryptum (strain JF-5)).